A 359-amino-acid polypeptide reads, in one-letter code: Peptide chain release factor 1 (359 aa).

Residue Gln-235 is modified to N5-methylglutamine.

This sequence belongs to the prokaryotic/mitochondrial release factor family. In terms of processing, methylated by PrmC. Methylation increases the termination efficiency of RF1.

It is found in the cytoplasm. Functionally, peptide chain release factor 1 directs the termination of translation in response to the peptide chain termination codons UAG and UAA. The sequence is that of Peptide chain release factor 1 from Aromatoleum aromaticum (strain DSM 19018 / LMG 30748 / EbN1) (Azoarcus sp. (strain EbN1)).